Reading from the N-terminus, the 318-residue chain is Protein W (318 aa).

Disordered stretches follow at residues 1 to 23 (MDQD…GGRE) and 38 to 318 (SEPT…KKGA). Basic and acidic residues predominate over residues 7 to 20 (ILKEDSEVEREAPG). Residues 50–59 (LHNTINTPQG) show a composition bias toward polar residues. A Phosphoserine; by host modification is found at S68. The segment covering 83 to 101 (RSGEESRVSGRTSKPEAEA) has biased composition (basic and acidic residues). S125 is modified (phosphoserine; by host). A compositionally biased stretch (basic and acidic residues) spans 150-168 (GIEDENREMAAHPDKRGED). The span at 191–206 (ASNNGRSMEPGSSHSA) shows a compositional bias: polar residues. S192, S249, S257, and S260 each carry phosphoserine; by host.

This is Protein W (P/V/C) from Sendai virus (strain Fushimi) (SeV).